A 603-amino-acid polypeptide reads, in one-letter code: Elongation factor 4 (603 aa).

Positions 7–189 constitute a tr-type G domain; that stretch reads SRIRNFSIIA…SIVHLVPPPQ (183 aa). Residues 19–24 and 136–139 each bind GTP; these read DHGKST and NKID.

It belongs to the TRAFAC class translation factor GTPase superfamily. Classic translation factor GTPase family. LepA subfamily.

It localises to the cell inner membrane. The enzyme catalyses GTP + H2O = GDP + phosphate + H(+). Functionally, required for accurate and efficient protein synthesis under certain stress conditions. May act as a fidelity factor of the translation reaction, by catalyzing a one-codon backward translocation of tRNAs on improperly translocated ribosomes. Back-translocation proceeds from a post-translocation (POST) complex to a pre-translocation (PRE) complex, thus giving elongation factor G a second chance to translocate the tRNAs correctly. Binds to ribosomes in a GTP-dependent manner. This is Elongation factor 4 from Rippkaea orientalis (strain PCC 8801 / RF-1) (Cyanothece sp. (strain PCC 8801)).